A 240-amino-acid polypeptide reads, in one-letter code: Bidirectional sugar transporter SWEET7c (240 aa).

The Extracellular segment spans residues 1–12 (MVSPDLIRNVVG). The MtN3/slv 1 domain occupies 10-48 (VVGIVGNVISFGLFLSPVPIFWWIIKNKNVQNFKADPIL). Residues 13 to 33 (IVGNVISFGLFLSPVPIFWWI) traverse the membrane as a helical segment. Over 34-46 (IKNKNVQNFKADP) the chain is Cytoplasmic. Residues 47 to 67 (ILVVTINGISLVIEAVYLTIF) form a helical membrane-spanning segment. Residues 68-78 (FLFSDKKNKKK) lie on the Extracellular side of the membrane. A helical transmembrane segment spans residues 79–99 (MGVVLATEALFMAAVAVGVLL). The Cytoplasmic portion of the chain corresponds to 100-108 (GAHTHQRRS). The helical transmembrane segment at 109–129 (LIVGILCVIFGTIMYSSPLTI) threads the bilayer. A MtN3/slv 2 domain is found at 110–191 (IVGILCVIFG…LILYAIYYRT (82 aa)). Residues 130-140 (MVVKTKSVEYM) lie on the Extracellular side of the membrane. A helical membrane pass occupies residues 141 to 161 (PLLLSVVSFLNGLCWTLYALI). Over 162-164 (RFD) the chain is Cytoplasmic. The helical transmembrane segment at 165–185 (IFITIPNGLGVLFAIMQLILY) threads the bilayer. At 186–240 (AIYYRTTPKKQDKNLELPTVAPIAKDTSIVAPVGNDDDVNGSTASHATINITIEP) the chain is on the extracellular side. N-linked (GlcNAc...) asparagine glycosylation is found at Asn225 and Asn235.

The protein belongs to the SWEET sugar transporter family. As to quaternary structure, forms homooligomers and/or heterooligomers.

Its subcellular location is the cell membrane. In terms of biological role, mediates both low-affinity uptake and efflux of sugar across the plasma membrane. This is Bidirectional sugar transporter SWEET7c (SWEET7C) from Oryza sativa subsp. indica (Rice).